The chain runs to 365 residues: Aspartate-semialdehyde dehydrogenase (365 aa).

Residues T15, G16, T17, V18, S40, S43, L89, and D90 each coordinate NADP(+). C156 functions as the Acyl-thioester intermediate in the catalytic mechanism. Residue G188 participates in NADP(+) binding. H255 (proton acceptor) is an active-site residue. An NADP(+)-binding site is contributed by N342.

Belongs to the aspartate-semialdehyde dehydrogenase family. Homotetramer; dimer of dimers.

The protein localises to the cytoplasm. Its subcellular location is the cytosol. It is found in the nucleus. The catalysed reaction is L-aspartate 4-semialdehyde + phosphate + NADP(+) = 4-phospho-L-aspartate + NADPH + H(+). It participates in amino-acid biosynthesis; L-methionine biosynthesis via de novo pathway; L-homoserine from L-aspartate: step 2/3. Its pathway is amino-acid biosynthesis; L-threonine biosynthesis; L-threonine from L-aspartate: step 2/5. With respect to regulation, inhibited by the competitive inhibitor 1,4-benzoquinone and derivates such as 2-chloro-3-methoxy-1,4-naphthoquinone, 2,3-dichloro-1,4-naphthoquinone, 2-chloro-1,4-naphthoquinone, 2-bromo-1,4-naphthoquinone and 2,3-dichloro-5,8-dihydroxy-1,4-naphthoquinone. Catalyzes the NADPH-dependent formation of L-aspartate 4-semialdehyde (L-ASA) by the reductive dephosphorylation of 4-phospho-L-aspartate. Mediates the second step in the biosynthesis of amino acids that derive from aspartate (the aspartate family of amino acids), including methioinine and threonine, the latter of which is a precursor to isoleucine. This is Aspartate-semialdehyde dehydrogenase from Cryptococcus neoformans var. neoformans serotype D (strain JEC21 / ATCC MYA-565) (Filobasidiella neoformans).